The sequence spans 367 residues: Polygalacturonase (367 aa).

An N-terminal signal peptide occupies residues 1–19 (MSIRLIAVLSAASIAVTSA). Cys27 and Cys42 are disulfide-bonded. N-linked (GlcNAc...) asparagine glycosylation occurs at Asn185. The stretch at 187 to 208 (TDQLTIEDTVVKNQDDCIAVNQ) is one PbH1 1 repeat. Residue Asp201 is the Proton donor of the active site. Cys203 and Cys219 form a disulfide bridge. His223 is an active-site residue. One copy of the PbH1 2 repeat lies at 240–261 (VRNVTFSNSVVRKSRNGIHIKT). N-linked (GlcNAc...) asparagine glycosylation is present at Asn242. A disulfide bond links Cys334 and Cys339. 2 N-linked (GlcNAc...) asparagine glycosylation sites follow: Asn343 and Asn357. The cysteines at positions 358 and 367 are disulfide-linked.

The protein belongs to the glycosyl hydrolase 28 family. In terms of tissue distribution, expressed in larval carcasses and gut, and adult gut.

It is found in the secreted. Its subcellular location is the cell wall. The catalysed reaction is (1,4-alpha-D-galacturonosyl)n+m + H2O = (1,4-alpha-D-galacturonosyl)n + (1,4-alpha-D-galacturonosyl)m.. The chain is Polygalacturonase from Phaedon cochleariae (Mustard beetle).